Reading from the N-terminus, the 238-residue chain is Ribonuclease PH (238 aa).

Phosphate is bound by residues Arg-86 and 124 to 126 (GTR).

Belongs to the RNase PH family. Homohexameric ring arranged as a trimer of dimers.

The enzyme catalyses tRNA(n+1) + phosphate = tRNA(n) + a ribonucleoside 5'-diphosphate. In terms of biological role, phosphorolytic 3'-5' exoribonuclease that plays an important role in tRNA 3'-end maturation. Removes nucleotide residues following the 3'-CCA terminus of tRNAs; can also add nucleotides to the ends of RNA molecules by using nucleoside diphosphates as substrates, but this may not be physiologically important. Probably plays a role in initiation of 16S rRNA degradation (leading to ribosome degradation) during starvation. The polypeptide is Ribonuclease PH (Enterobacter sp. (strain 638)).